We begin with the raw amino-acid sequence, 214 residues long: Large ribosomal subunit protein uL3 (214 aa).

Positions 131–155 (GAQRTSHGNSRSHRVPGSIGMAQDP) are disordered. N5-methylglutamine is present on Gln-153.

This sequence belongs to the universal ribosomal protein uL3 family. Part of the 50S ribosomal subunit. Forms a cluster with proteins L14 and L19. Post-translationally, methylated by PrmB.

One of the primary rRNA binding proteins, it binds directly near the 3'-end of the 23S rRNA, where it nucleates assembly of the 50S subunit. The chain is Large ribosomal subunit protein uL3 from Neisseria meningitidis serogroup C (strain 053442).